The chain runs to 143 residues: Large ribosomal subunit protein uL15 (143 aa).

Composition is skewed to basic residues over residues 1 to 13 (MIRKSKKITKMRG) and 23 to 38 (KKHRGAGHRGGRGNAG). A disordered region spans residues 1-38 (MIRKSKKITKMRGSRTCGYGEAKKHRGAGHRGGRGNAG).

Belongs to the universal ribosomal protein uL15 family. As to quaternary structure, part of the 50S ribosomal subunit.

In terms of biological role, binds to the 23S rRNA. The sequence is that of Large ribosomal subunit protein uL15 from Methanococcus maripaludis (strain C6 / ATCC BAA-1332).